The chain runs to 265 residues: Indole-3-glycerol phosphate synthase (265 aa).

The protein belongs to the TrpC family.

The catalysed reaction is 1-(2-carboxyphenylamino)-1-deoxy-D-ribulose 5-phosphate + H(+) = (1S,2R)-1-C-(indol-3-yl)glycerol 3-phosphate + CO2 + H2O. It functions in the pathway amino-acid biosynthesis; L-tryptophan biosynthesis; L-tryptophan from chorismate: step 4/5. This chain is Indole-3-glycerol phosphate synthase, found in Chromobacterium violaceum (strain ATCC 12472 / DSM 30191 / JCM 1249 / CCUG 213 / NBRC 12614 / NCIMB 9131 / NCTC 9757 / MK).